A 374-amino-acid polypeptide reads, in one-letter code: Putative glutamate--cysteine ligase 2 (374 aa).

This sequence belongs to the glutamate--cysteine ligase type 2 family. YbdK subfamily.

The catalysed reaction is L-cysteine + L-glutamate + ATP = gamma-L-glutamyl-L-cysteine + ADP + phosphate + H(+). Its function is as follows. ATP-dependent carboxylate-amine ligase which exhibits weak glutamate--cysteine ligase activity. The polypeptide is Putative glutamate--cysteine ligase 2 (Leptothrix cholodnii (strain ATCC 51168 / LMG 8142 / SP-6) (Leptothrix discophora (strain SP-6))).